A 99-amino-acid chain; its full sequence is Malonate decarboxylase acyl carrier protein (99 aa).

O-(phosphoribosyl dephospho-coenzyme A)serine is present on serine 25.

It belongs to the MdcC family. Covalently binds the prosthetic group of malonate decarboxylase.

The protein localises to the cytoplasm. In terms of biological role, subunit of malonate decarboxylase, it is an acyl carrier protein to which acetyl and malonyl thioester residues are bound via a 2'-(5''-phosphoribosyl)-3'-dephospho-CoA prosthetic group and turn over during the catalytic mechanism. This is Malonate decarboxylase acyl carrier protein from Pseudomonas paraeruginosa (strain DSM 24068 / PA7) (Pseudomonas aeruginosa (strain PA7)).